The chain runs to 600 residues: Probable translation initiation factor IF-2 (600 aa).

Positions 10-227 constitute a tr-type G domain; that stretch reads LRQPIVVVLG…LLAGLTQRYL (218 aa). Residues 19-26 are G1; the sequence is GHVDHGKT. GTP is bound at residue 19–26; it reads GHVDHGKT. The tract at residues 44–48 is G2; the sequence is EMTQE. Positions 83–86 are G3; sequence DTPG. GTP contacts are provided by residues 83–87 and 137–140; these read DTPGH and NKID. Residues 137–140 form a G4 region; that stretch reads NKID. A G5 region spans residues 205 to 207; it reads SAK.

This sequence belongs to the TRAFAC class translation factor GTPase superfamily. Classic translation factor GTPase family. IF-2 subfamily.

In terms of biological role, function in general translation initiation by promoting the binding of the formylmethionine-tRNA to ribosomes. Seems to function along with eIF-2. In Saccharolobus solfataricus (strain ATCC 35092 / DSM 1617 / JCM 11322 / P2) (Sulfolobus solfataricus), this protein is Probable translation initiation factor IF-2.